A 124-amino-acid chain; its full sequence is Large ribosomal subunit protein eL22 (124 aa).

This sequence belongs to the eukaryotic ribosomal protein eL22 family. As to quaternary structure, component of the large ribosomal subunit. Mature ribosomes consist of a small (40S) and a large (60S) subunit. The 40S subunit contains about 32 different proteins and 1 molecule of RNA (18S). The 60S subunit contains 45 different proteins and 3 molecules of RNA (25S, 5.8S and 5S).

It is found in the cytoplasm. Component of the ribosome, a large ribonucleoprotein complex responsible for the synthesis of proteins in the cell. The small ribosomal subunit (SSU) binds messenger RNAs (mRNAs) and translates the encoded message by selecting cognate aminoacyl-transfer RNA (tRNA) molecules. The large subunit (LSU) contains the ribosomal catalytic site termed the peptidyl transferase center (PTC), which catalyzes the formation of peptide bonds, thereby polymerizing the amino acids delivered by tRNAs into a polypeptide chain. The nascent polypeptides leave the ribosome through a tunnel in the LSU and interact with protein factors that function in enzymatic processing, targeting, and the membrane insertion of nascent chains at the exit of the ribosomal tunnel. This is Large ribosomal subunit protein eL22 from Candida albicans (strain SC5314 / ATCC MYA-2876) (Yeast).